Here is a 589-residue protein sequence, read N- to C-terminus: Monocopper oxidase-like protein SKS1 (589 aa).

A signal peptide spans 1 to 24; that stretch reads MAATCSLLASFLLCFALLSAVSFA. N-linked (GlcNAc...) asparagine glycosylation is found at Asn-62, Asn-111, Asn-204, Asn-243, Asn-260, Asn-296, Asn-345, Asn-365, Asn-433, and Asn-447. The disordered stretch occupies residues 322 to 356; the sequence is LPVPKTDVSSPWSAMSQPKTIRQNTSASGARPNPQ. The span at 328-349 shows a compositional bias: polar residues; the sequence is DVSSPWSAMSQPKTIRQNTSAS. His-455 contacts Cu cation. Ser-563 is lipidated: GPI-anchor amidated serine. Residues 564-589 constitute a propeptide, removed in mature form; it reads AATSILNGHLKLMLLMVLLASVFRFC.

The protein belongs to the multicopper oxidase family. Cu cation serves as cofactor.

Its subcellular location is the cell membrane. In Arabidopsis thaliana (Mouse-ear cress), this protein is Monocopper oxidase-like protein SKS1 (SKS1).